The chain runs to 201 residues: FMN-dependent NADH:quinone oxidoreductase (201 aa).

FMN is bound at residue 92–95; it reads MWNL.

Belongs to the azoreductase type 1 family. Homodimer. It depends on FMN as a cofactor.

It catalyses the reaction 2 a quinone + NADH + H(+) = 2 a 1,4-benzosemiquinone + NAD(+). The enzyme catalyses N,N-dimethyl-1,4-phenylenediamine + anthranilate + 2 NAD(+) = 2-(4-dimethylaminophenyl)diazenylbenzoate + 2 NADH + 2 H(+). In terms of biological role, quinone reductase that provides resistance to thiol-specific stress caused by electrophilic quinones. Functionally, also exhibits azoreductase activity. Catalyzes the reductive cleavage of the azo bond in aromatic azo compounds to the corresponding amines. This Caldicellulosiruptor saccharolyticus (strain ATCC 43494 / DSM 8903 / Tp8T 6331) protein is FMN-dependent NADH:quinone oxidoreductase.